The chain runs to 368 residues: tRNA-specific 2-thiouridylase MnmA (368 aa).

ATP is bound by residues 10–17 (AMSGGIDS) and methionine 36. Cysteine 106 (nucleophile) is an active-site residue. Residues cysteine 106 and cysteine 203 are joined by a disulfide bond. Residue glycine 130 participates in ATP binding. An interaction with tRNA region spans residues 152-154 (KDQ). The Cysteine persulfide intermediate role is filled by cysteine 203. The interval 313 to 314 (RY) is interaction with tRNA.

The protein belongs to the MnmA/TRMU family.

It is found in the cytoplasm. It carries out the reaction S-sulfanyl-L-cysteinyl-[protein] + uridine(34) in tRNA + AH2 + ATP = 2-thiouridine(34) in tRNA + L-cysteinyl-[protein] + A + AMP + diphosphate + H(+). Functionally, catalyzes the 2-thiolation of uridine at the wobble position (U34) of tRNA, leading to the formation of s(2)U34. The polypeptide is tRNA-specific 2-thiouridylase MnmA (Cytophaga hutchinsonii (strain ATCC 33406 / DSM 1761 / CIP 103989 / NBRC 15051 / NCIMB 9469 / D465)).